Here is a 105-residue protein sequence, read N- to C-terminus: Heat shock protein HspQ (105 aa).

A disordered region spans residues Q84 to N105. Residues K96–N105 show a composition bias toward basic residues.

Belongs to the HspQ family.

The protein resides in the cytoplasm. Functionally, involved in the degradation of certain denaturated proteins, including DnaA, during heat shock stress. This Wigglesworthia glossinidia brevipalpis protein is Heat shock protein HspQ.